The sequence spans 610 residues: UvrABC system protein C (610 aa).

In terms of domain architecture, GIY-YIG spans 16-94 (SQPGVYRMYD…IKLYQPRYNV (79 aa)). Positions 204–239 (DQVLTQLIARMEKASQDLAFEEAARIRDQIQAVRRV) constitute a UVR domain.

This sequence belongs to the UvrC family. Interacts with UvrB in an incision complex.

The protein localises to the cytoplasm. The UvrABC repair system catalyzes the recognition and processing of DNA lesions. UvrC both incises the 5' and 3' sides of the lesion. The N-terminal half is responsible for the 3' incision and the C-terminal half is responsible for the 5' incision. This is UvrABC system protein C from Salmonella enteritidis PT4 (strain P125109).